The chain runs to 124 residues: Prefoldin subunit beta (124 aa).

Belongs to the prefoldin subunit beta family. Heterohexamer of two alpha and four beta subunits.

It localises to the cytoplasm. In terms of biological role, molecular chaperone capable of stabilizing a range of proteins. Seems to fulfill an ATP-independent, HSP70-like function in archaeal de novo protein folding. The polypeptide is Prefoldin subunit beta (pfdB) (Thermoplasma acidophilum (strain ATCC 25905 / DSM 1728 / JCM 9062 / NBRC 15155 / AMRC-C165)).